Here is a 272-residue protein sequence, read N- to C-terminus: Phosphate import ATP-binding protein PstB (272 aa).

The 242-residue stretch at I26–I267 folds into the ABC transporter domain. ATP is bound at residue G58–S65.

This sequence belongs to the ABC transporter superfamily. Phosphate importer (TC 3.A.1.7) family. As to quaternary structure, the complex is composed of two ATP-binding proteins (PstB), two transmembrane proteins (PstC and PstA) and a solute-binding protein (PstS).

The protein localises to the cell inner membrane. The enzyme catalyses phosphate(out) + ATP + H2O = ADP + 2 phosphate(in) + H(+). Part of the ABC transporter complex PstSACB involved in phosphate import. Responsible for energy coupling to the transport system. In Hydrogenovibrio crunogenus (strain DSM 25203 / XCL-2) (Thiomicrospira crunogena), this protein is Phosphate import ATP-binding protein PstB.